The following is a 442-amino-acid chain: 5'-deoxyadenosine deaminase (442 aa).

Positions 72 and 74 each coordinate Zn(2+). Residues Glu101 and His193 each contribute to the substrate site. His220 is a binding site for Zn(2+). Residues Glu223 and Asp309 each contribute to the substrate site. Residue Asp309 participates in Zn(2+) binding.

It belongs to the metallo-dependent hydrolases superfamily. MTA/SAH deaminase family. In terms of assembly, homotetramer. The cofactor is Zn(2+).

It carries out the reaction 5'-deoxyadenosine + H2O + H(+) = 5'-deoxyinosine + NH4(+). The catalysed reaction is S-adenosyl-L-homocysteine + H2O + H(+) = S-inosyl-L-homocysteine + NH4(+). The enzyme catalyses S-methyl-5'-thioadenosine + H2O + H(+) = S-methyl-5'-thioinosine + NH4(+). It catalyses the reaction adenosine + H2O + H(+) = inosine + NH4(+). It participates in amino-acid biosynthesis; S-adenosyl-L-methionine biosynthesis. Catalyzes the deamination of three SAM-derived enzymatic products, namely 5'-deoxyadenosine, S-adenosyl-L-homocysteine, and 5'-methylthioadenosine, to produce the inosine analogs. Can also deaminate adenosine. The preferred substrate for this enzyme is 5'-deoxyadenosine, but all these substrates are efficiently deaminated. Likely functions in a S-adenosyl-L-methionine (SAM) recycling pathway from S-adenosyl-L-homocysteine (SAH) produced from SAM-dependent methylation reactions. May also be involved in the recycling of 5'-deoxyadenosine, whereupon the 5'-deoxyribose moiety of 5'-deoxyinosine is further metabolized to deoxyhexoses used for the biosynthesis of aromatic amino acids in methanogens. This is 5'-deoxyadenosine deaminase from Methanoregula boonei (strain DSM 21154 / JCM 14090 / 6A8).